The following is a 112-amino-acid chain: uncharacterized protein (112 aa).

N-linked (GlcNAc...) asparagine; by host glycans are attached at residues N29 and N60. Residues 66-86 traverse the membrane as a helical segment; it reads IFNGLGFILIVIFIYLLLITL.

Belongs to the asfivirus B117L family.

It is found in the host membrane. It localises to the virion. This is an uncharacterized protein from African swine fever virus (isolate Tick/South Africa/Pretoriuskop Pr4/1996) (ASFV).